The primary structure comprises 292 residues: Protein/nucleic acid deglycase HchA (292 aa).

Residues 1-12 (MSQDVNELSKQP) are compositionally biased toward polar residues. Residues 1-23 (MSQDVNELSKQPTPDKAEDNAFF) are disordered. Residue Cys190 is the Nucleophile of the active site.

It belongs to the peptidase C56 family. HchA subfamily.

Its subcellular location is the cytoplasm. The catalysed reaction is N(omega)-(1-hydroxy-2-oxopropyl)-L-arginyl-[protein] + H2O = lactate + L-arginyl-[protein] + H(+). It catalyses the reaction N(6)-(1-hydroxy-2-oxopropyl)-L-lysyl-[protein] + H2O = lactate + L-lysyl-[protein] + H(+). It carries out the reaction S-(1-hydroxy-2-oxopropyl)-L-cysteinyl-[protein] + H2O = lactate + L-cysteinyl-[protein] + H(+). The enzyme catalyses N(omega)-(1-hydroxy-2-oxoethyl)-L-arginyl-[protein] + H2O = L-arginyl-[protein] + glycolate + H(+). The catalysed reaction is N(6)-(1-hydroxy-2-oxoethyl)-L-lysyl-[protein] + H2O = glycolate + L-lysyl-[protein] + H(+). It catalyses the reaction S-(1-hydroxy-2-oxoethyl)-L-cysteinyl-[protein] + H2O = glycolate + L-cysteinyl-[protein] + H(+). It carries out the reaction N(2)-(1-hydroxy-2-oxopropyl)-dGTP + H2O = lactate + dGTP + H(+). The enzyme catalyses N(2)-(1-hydroxy-2-oxopropyl)-GTP + H2O = lactate + GTP + H(+). The catalysed reaction is N(2)-(1-hydroxy-2-oxopropyl)-GDP + H2O = lactate + GDP + H(+). It catalyses the reaction N(2)-(1-hydroxy-2-oxopropyl)-GMP + H2O = lactate + GMP + H(+). It carries out the reaction N(2)-(1-hydroxy-2-oxoethyl)-dGTP + H2O = dGTP + glycolate + H(+). The enzyme catalyses N(2)-(1-hydroxy-2-oxoethyl)-GTP + H2O = glycolate + GTP + H(+). The catalysed reaction is N(2)-(1-hydroxy-2-oxoethyl)-GDP + H2O = glycolate + GDP + H(+). It catalyses the reaction N(2)-(1-hydroxy-2-oxoethyl)-GMP + H2O = glycolate + GMP + H(+). It carries out the reaction an N(2)-(1-hydroxy-2-oxopropyl)-guanosine in RNA + H2O = a guanosine in RNA + lactate + H(+). The enzyme catalyses an N(2)-(1-hydroxy-2-oxopropyl)-2'-deoxyguanosine in DNA + H2O = a 2'-deoxyguanosine in DNA + lactate + H(+). The catalysed reaction is an N(2)-(1-hydroxy-2-oxoethyl)-guanosine in RNA + H2O = a guanosine in RNA + glycolate + H(+). It catalyses the reaction an N(2)-(1-hydroxy-2-oxoethyl)-2'-deoxyguanosine in DNA + H2O = a 2'-deoxyguanosine in DNA + glycolate + H(+). Protein and nucleotide deglycase that catalyzes the deglycation of the Maillard adducts formed between amino groups of proteins or nucleotides and reactive carbonyl groups of glyoxals. Thus, functions as a protein deglycase that repairs methylglyoxal- and glyoxal-glycated proteins, and releases repaired proteins and lactate or glycolate, respectively. Deglycates cysteine, arginine and lysine residues in proteins, and thus reactivates these proteins by reversing glycation by glyoxals. Acts on early glycation intermediates (hemithioacetals and aminocarbinols), preventing the formation of Schiff bases and advanced glycation endproducts (AGE). Also functions as a nucleotide deglycase able to repair glycated guanine in the free nucleotide pool (GTP, GDP, GMP, dGTP) and in DNA and RNA. Is thus involved in a major nucleotide repair system named guanine glycation repair (GG repair), dedicated to reversing methylglyoxal and glyoxal damage via nucleotide sanitization and direct nucleic acid repair. Plays an important role in protecting cells from carbonyl stress. In Staphylococcus aureus (strain MSSA476), this protein is Protein/nucleic acid deglycase HchA.